The chain runs to 338 residues: Thiosulfate-binding protein (338 aa).

Residues 1 to 25 (MAVNLLKKNSLALVASLLLAGHVQA) form the signal peptide.

It belongs to the prokaryotic sulfate-binding protein family. As to quaternary structure, the complex is composed of two ATP-binding proteins (CysA), two transmembrane proteins (CysT and CysW) and a solute-binding protein (CysP).

Its subcellular location is the periplasm. Its function is as follows. Part of the ABC transporter complex CysAWTP (TC 3.A.1.6.1) involved in sulfate/thiosulfate import. This protein specifically binds thiosulfate and is involved in its transmembrane transport. This is Thiosulfate-binding protein (cysP) from Escherichia coli (strain K12).